Consider the following 73-residue polypeptide: Cell division protein ZapB (73 aa).

Residues 3–66 (LELLSQLETK…SWSDKVNGLV (64 aa)) are a coiled coil.

The protein belongs to the ZapB family. In terms of assembly, homodimer. The ends of the coiled-coil dimer bind to each other, forming polymers. Interacts with FtsZ.

Its subcellular location is the cytoplasm. Its function is as follows. Non-essential, abundant cell division factor that is required for proper Z-ring formation. It is recruited early to the divisome by direct interaction with FtsZ, stimulating Z-ring assembly and thereby promoting cell division earlier in the cell cycle. Its recruitment to the Z-ring requires functional FtsA or ZipA. The polypeptide is Cell division protein ZapB (Shewanella frigidimarina (strain NCIMB 400)).